The following is an 88-amino-acid chain: Cytochrome c oxidase subunit 6B2 (88 aa).

A disordered region spans residues 1 to 21; sequence MLGVQAQMPAPGQWTTPPFDP. A CHCH domain is found at 29–75; that stretch reads TRNCYQNFLDYHRCVKTMDRRGKNTQACDYYFRVFHSLCPVSWVQRW. A Cx9C motif motif is present at residues 32 to 42; the sequence is CYQNFLDYHRC. Cystine bridges form between Cys-32/Cys-67 and Cys-42/Cys-56. The short motif at 56-67 is the Cx10C motif element; that stretch reads CDYYFRVFHSLC.

This sequence belongs to the cytochrome c oxidase subunit 6B family. Component of the cytochrome c oxidase (complex IV, CIV), a multisubunit enzyme composed of 14 subunits. The complex is composed of a catalytic core of 3 subunits MT-CO1, MT-CO2 and MT-CO3, encoded in the mitochondrial DNA, and 11 supernumerary subunits COX4I, COX5A, COX5B, COX6A, COX6B, COX6C, COX7A, COX7B, COX7C, COX8 and NDUFA4, which are encoded in the nuclear genome. The complex exists as a monomer or a dimer and forms supercomplexes (SCs) in the inner mitochondrial membrane with NADH-ubiquinone oxidoreductase (complex I, CI) and ubiquinol-cytochrome c oxidoreductase (cytochrome b-c1 complex, complex III, CIII), resulting in different assemblies (supercomplex SCI(1)III(2)IV(1) and megacomplex MCI(2)III(2)IV(2)). As to expression, testis specific.

The protein resides in the mitochondrion inner membrane. Its pathway is energy metabolism; oxidative phosphorylation. Functionally, component of the cytochrome c oxidase, the last enzyme in the mitochondrial electron transport chain which drives oxidative phosphorylation. The respiratory chain contains 3 multisubunit complexes succinate dehydrogenase (complex II, CII), ubiquinol-cytochrome c oxidoreductase (cytochrome b-c1 complex, complex III, CIII) and cytochrome c oxidase (complex IV, CIV), that cooperate to transfer electrons derived from NADH and succinate to molecular oxygen, creating an electrochemical gradient over the inner membrane that drives transmembrane transport and the ATP synthase. Cytochrome c oxidase is the component of the respiratory chain that catalyzes the reduction of oxygen to water. Electrons originating from reduced cytochrome c in the intermembrane space (IMS) are transferred via the dinuclear copper A center (CU(A)) of subunit 2 and heme A of subunit 1 to the active site in subunit 1, a binuclear center (BNC) formed by heme A3 and copper B (CU(B)). The BNC reduces molecular oxygen to 2 water molecules using 4 electrons from cytochrome c in the IMS and 4 protons from the mitochondrial matrix. The protein is Cytochrome c oxidase subunit 6B2 (Cox6b2) of Rattus norvegicus (Rat).